The following is a 221-amino-acid chain: MRSSLLTLPKSFLGFMPLYLAVEIVLGISILNKCSGAYGILALFTGHPLDFMQWIAYLWSVFTLIVFSQGLYLIHKPNLLVFSQICVLYTIDTISTCFFTLWFTTQWFTLEDTANIDGNNALQSNPISTGKLTERGIDISKQSATESYEYTMTILITLVSLIFRFYFNFILASFVQELLHHPKYLVDRDDVEQNLKNKPIWKRLWAKSQKGCYKLCKNLLE.

A run of 4 helical transmembrane segments spans residues 11 to 31 (SFLGFMPLYLAVEIVLGISIL), 54 to 74 (WIAYLWSVFTLIVFSQGLYLI), 79 to 99 (LLVFSQICVLYTIDTISTCFF), and 154 to 174 (ILITLVSLIFRFYFNFILASF). A COPI vesicle-binding region spans residues 176-221 (QELLHHPKYLVDRDDVEQNLKNKPIWKRLWAKSQKGCYKLCKNLLE).

The protein belongs to the KEI1 family. In terms of assembly, component of the inositol phosphorylceramide synthase complex composed of at least AUR1 and KEI1. Interacts (via C-terminal region) with COP1 and SEC21. Note=The interaction with AUR1 seems to occur with the full-length protein before cleavage by KEX2 since both full-length and short chains of KEI1 interact with AUR1. In terms of processing, the precursor protein is cleaved into two polypeptide chains, KEI1N and KEI1C. The cleavage is performed in the Golgi apparatus by the KEX2 protease which recognizes residue Arg-135. Generation of KEX2 cleavage site may have been an accidental event in evolution without specific advantages or disadvantages in IPC synthesis.

It localises to the golgi apparatus membrane. In terms of biological role, regulatory component of the inositol phosphorylceramide (ICP) synthase which catalyzes the addition of a phosphorylinositol group onto ceramide to form inositol phosphorylceramide, an essential step in sphingolipid biosynthesis. Helps the medial Golgi localization of IPC synthase in a COPI vesicle-dependent manner. In Saccharomyces cerevisiae (strain ATCC 204508 / S288c) (Baker's yeast), this protein is Inositol phosphorylceramide synthase regulatory subunit KEI1 (KEI1).